Here is a 311-residue protein sequence, read N- to C-terminus: Glycerol-3-phosphate dehydrogenase [NAD(P)+] (311 aa).

The NADPH site is built by Trp-12, Arg-31, Arg-32, and Lys-96. Residues Lys-96, Gly-124, and Ser-126 each contribute to the sn-glycerol 3-phosphate site. Residue Ala-128 coordinates NADPH. Sn-glycerol 3-phosphate is bound by residues Lys-178, Asp-231, Ser-241, Arg-242, and Asn-243. Lys-178 serves as the catalytic Proton acceptor. Position 242 (Arg-242) interacts with NADPH. Val-266 and Glu-268 together coordinate NADPH.

Belongs to the NAD-dependent glycerol-3-phosphate dehydrogenase family.

It is found in the cytoplasm. The enzyme catalyses sn-glycerol 3-phosphate + NAD(+) = dihydroxyacetone phosphate + NADH + H(+). It catalyses the reaction sn-glycerol 3-phosphate + NADP(+) = dihydroxyacetone phosphate + NADPH + H(+). The protein operates within membrane lipid metabolism; glycerophospholipid metabolism. Its function is as follows. Catalyzes the reduction of the glycolytic intermediate dihydroxyacetone phosphate (DHAP) to sn-glycerol 3-phosphate (G3P), the key precursor for phospholipid synthesis. This chain is Glycerol-3-phosphate dehydrogenase [NAD(P)+], found in Helicobacter hepaticus (strain ATCC 51449 / 3B1).